The following is a 250-amino-acid chain: Ribonuclease HII (250 aa).

The RNase H type-2 domain maps to 66-250; that stretch reads QLVAGVDEVG…TFAPVSDFFK (185 aa). 3 residues coordinate a divalent metal cation: Asp72, Glu73, and Asp164.

Belongs to the RNase HII family. Mn(2+) serves as cofactor. It depends on Mg(2+) as a cofactor.

It localises to the cytoplasm. It carries out the reaction Endonucleolytic cleavage to 5'-phosphomonoester.. Functionally, endonuclease that specifically degrades the RNA of RNA-DNA hybrids. The sequence is that of Ribonuclease HII from Lactobacillus acidophilus (strain ATCC 700396 / NCK56 / N2 / NCFM).